A 388-amino-acid polypeptide reads, in one-letter code: Chaperone protein DnaJ (388 aa).

The region spanning 4–69 is the J domain; that stretch reads DYYDILGVDE…EKRQRYDQFG (66 aa). 3 stretches are compositionally biased toward basic and acidic residues: residues 27–50, 58–73, and 113–124; these read KAMEYHPDRNPDDPEAEQKFKEAS, DPEKRQRYDQFGHDGV, and GRSERGRGRPGS. Disordered stretches follow at residues 27 to 86 and 99 to 125; these read KAME…GRGR and SDIFGGAPGGGRGRGRSERGRGRPGSD. The CR-type zinc-finger motif lies at 140–225; sequence GTEKNLRLQK…CGGEGRVQGE (86 aa). Zn(2+)-binding residues include cysteine 153, cysteine 156, cysteine 173, cysteine 176, cysteine 199, cysteine 202, cysteine 213, and cysteine 216. CXXCXGXG motif repeat units follow at residues 153–160, 173–180, 199–206, and 213–220; these read CESCDGTG, CPKCDGTG, CPRCEGEG, and CDDCGGEG. Over residues 362–376 the composition is skewed to basic and acidic residues; it reads AHDNFQPRPPEEDTQ. Positions 362 to 388 are disordered; it reads AHDNFQPRPPEEDTQKSFFRRVSDVFS.

This sequence belongs to the DnaJ family. In terms of assembly, homodimer. It depends on Zn(2+) as a cofactor.

It localises to the cytoplasm. Its function is as follows. Participates actively in the response to hyperosmotic and heat shock by preventing the aggregation of stress-denatured proteins and by disaggregating proteins, also in an autonomous, DnaK-independent fashion. Unfolded proteins bind initially to DnaJ; upon interaction with the DnaJ-bound protein, DnaK hydrolyzes its bound ATP, resulting in the formation of a stable complex. GrpE releases ADP from DnaK; ATP binding to DnaK triggers the release of the substrate protein, thus completing the reaction cycle. Several rounds of ATP-dependent interactions between DnaJ, DnaK and GrpE are required for fully efficient folding. Also involved, together with DnaK and GrpE, in the DNA replication of plasmids through activation of initiation proteins. This Salinibacter ruber (strain DSM 13855 / M31) protein is Chaperone protein DnaJ.